Reading from the N-terminus, the 344-residue chain is MLDERLISSHLLDEDDNNENSIRPGRLSEYIGQEKVKENVEVFITAARERKESLDHVLLSGPPGLGKTTLASIIANEVGKPIRKTSGPAIERPGDLAAILTNLEPGEVLFIDEIHRLNRNVEEIMYPAMEDYVIDIIIGKGPAARTLRLDLPPFTLIGATTRPGLLSSPLRDRFGISCRLDFYTPLELSEIILRAARILEISLDKEGATEIAGRSRGTPRVANRLLRRVRDYALVKGNGNIDFSLAKWALEMLEIDECGLDVMDRMILEAIIGKFSGGPVGLDTLAASVSEESDTISDVYEPYLLKLGFIQKTPRGRMATEHAYRHLGYPLKGNLEGKGLFSDA.

Residues Met-1 to Tyr-183 are large ATPase domain (RuvB-L). Residues Ile-22, Arg-23, Gly-64, Lys-67, Thr-68, Thr-69, Glu-130–Tyr-132, Arg-173, Tyr-183, and Arg-220 each bind ATP. Residue Thr-68 coordinates Mg(2+). The small ATPAse domain (RuvB-S) stretch occupies residues Thr-184–Glu-254. A head domain (RuvB-H) region spans residues Glu-257–Ala-344. Lys-312 and Arg-317 together coordinate DNA.

This sequence belongs to the RuvB family. Homohexamer. Forms an RuvA(8)-RuvB(12)-Holliday junction (HJ) complex. HJ DNA is sandwiched between 2 RuvA tetramers; dsDNA enters through RuvA and exits via RuvB. An RuvB hexamer assembles on each DNA strand where it exits the tetramer. Each RuvB hexamer is contacted by two RuvA subunits (via domain III) on 2 adjacent RuvB subunits; this complex drives branch migration. In the full resolvosome a probable DNA-RuvA(4)-RuvB(12)-RuvC(2) complex forms which resolves the HJ.

The protein localises to the cytoplasm. The enzyme catalyses ATP + H2O = ADP + phosphate + H(+). Its function is as follows. The RuvA-RuvB-RuvC complex processes Holliday junction (HJ) DNA during genetic recombination and DNA repair, while the RuvA-RuvB complex plays an important role in the rescue of blocked DNA replication forks via replication fork reversal (RFR). RuvA specifically binds to HJ cruciform DNA, conferring on it an open structure. The RuvB hexamer acts as an ATP-dependent pump, pulling dsDNA into and through the RuvAB complex. RuvB forms 2 homohexamers on either side of HJ DNA bound by 1 or 2 RuvA tetramers; 4 subunits per hexamer contact DNA at a time. Coordinated motions by a converter formed by DNA-disengaged RuvB subunits stimulates ATP hydrolysis and nucleotide exchange. Immobilization of the converter enables RuvB to convert the ATP-contained energy into a lever motion, pulling 2 nucleotides of DNA out of the RuvA tetramer per ATP hydrolyzed, thus driving DNA branch migration. The RuvB motors rotate together with the DNA substrate, which together with the progressing nucleotide cycle form the mechanistic basis for DNA recombination by continuous HJ branch migration. Branch migration allows RuvC to scan DNA until it finds its consensus sequence, where it cleaves and resolves cruciform DNA. This is Holliday junction branch migration complex subunit RuvB from Syntrophomonas wolfei subsp. wolfei (strain DSM 2245B / Goettingen).